Here is a 321-residue protein sequence, read N- to C-terminus: Probable cell division protein WhiA (321 aa).

Residues 275–308 (SLDELGRLADPPMTKDAVAGRIRRLLAMADKRAA) constitute a DNA-binding region (H-T-H motif).

It belongs to the WhiA family.

Involved in cell division and chromosome segregation. This Micrococcus luteus (strain ATCC 4698 / DSM 20030 / JCM 1464 / CCM 169 / CCUG 5858 / IAM 1056 / NBRC 3333 / NCIMB 9278 / NCTC 2665 / VKM Ac-2230) (Micrococcus lysodeikticus) protein is Probable cell division protein WhiA.